A 339-amino-acid chain; its full sequence is tRNA N6-adenosine threonylcarbamoyltransferase (339 aa).

2 residues coordinate Fe cation: His114 and His118. Substrate-binding positions include Val137–Gly141, Asp170, Gly183, Asp187, and Asn277. A Fe cation-binding site is contributed by Asp305.

It belongs to the KAE1 / TsaD family. Requires Fe(2+) as cofactor.

It is found in the cytoplasm. It catalyses the reaction L-threonylcarbamoyladenylate + adenosine(37) in tRNA = N(6)-L-threonylcarbamoyladenosine(37) in tRNA + AMP + H(+). Its function is as follows. Required for the formation of a threonylcarbamoyl group on adenosine at position 37 (t(6)A37) in tRNAs that read codons beginning with adenine. Is involved in the transfer of the threonylcarbamoyl moiety of threonylcarbamoyl-AMP (TC-AMP) to the N6 group of A37, together with TsaE and TsaB. TsaD likely plays a direct catalytic role in this reaction. The protein is tRNA N6-adenosine threonylcarbamoyltransferase of Clostridium beijerinckii (strain ATCC 51743 / NCIMB 8052) (Clostridium acetobutylicum).